Reading from the N-terminus, the 253-residue chain is Claudin domain-containing protein 1 (253 aa).

The chain crosses the membrane as a helical span at residues phenylalanine 5 to alanine 25. Residues asparagine 42 and asparagine 72 are each glycosylated (N-linked (GlcNAc...) asparagine). 3 consecutive transmembrane segments (helical) span residues phenylalanine 141 to alanine 161, isoleucine 175 to isoleucine 195, and phenylalanine 216 to alanine 236.

The protein belongs to the PMP-22/EMP/MP20 family. As to expression, in the brain, highly expressed in endothelial cells of the cerebellum compared to other regions (at protein level).

It is found in the cell junction. The protein localises to the tight junction. Its subcellular location is the cell membrane. Functionally, plays a role in negatively regulating the permeability of cells to small molecules. This is Claudin domain-containing protein 1 (Cldnd1) from Mus musculus (Mouse).